We begin with the raw amino-acid sequence, 238 residues long: Tetrahydromethanopterin S-methyltransferase subunit A 1 (238 aa).

Residues 2-218 are Cytoplasmic-facing; that stretch reads VEKKSPAEGW…RMFAGMYSGK (217 aa). His-84 is a binding site for 5-hydroxybenzimidazolylcob(I)amide. A helical membrane pass occupies residues 219–237; it reads VQGIMIGLAFTLTLGILLL. A topological domain (extracellular) is located at residue Val-238.

Belongs to the MtrA family. In terms of assembly, the complex is composed of 8 subunits; MtrA, MtrB, MtrC, MtrD, MtrE, MtrF, MtrG and MtrH. It depends on 5-hydroxybenzimidazolylcob(I)amide as a cofactor.

Its subcellular location is the cell membrane. It carries out the reaction 5-methyl-5,6,7,8-tetrahydromethanopterin + coenzyme M + 2 Na(+)(in) = 5,6,7,8-tetrahydromethanopterin + methyl-coenzyme M + 2 Na(+)(out). It participates in one-carbon metabolism; methanogenesis from CO(2); methyl-coenzyme M from 5,10-methylene-5,6,7,8-tetrahydromethanopterin: step 2/2. In terms of biological role, part of a complex that catalyzes the formation of methyl-coenzyme M and tetrahydromethanopterin from coenzyme M and methyl-tetrahydromethanopterin. This is an energy-conserving, sodium-ion translocating step. In Methanothermobacter thermautotrophicus (strain ATCC 29096 / DSM 1053 / JCM 10044 / NBRC 100330 / Delta H) (Methanobacterium thermoautotrophicum), this protein is Tetrahydromethanopterin S-methyltransferase subunit A 1.